Reading from the N-terminus, the 265-residue chain is Thymidylate synthase (265 aa).

Arg-21 is a dUMP binding site. Residue His-51 coordinates (6R)-5,10-methylene-5,6,7,8-tetrahydrofolate. 127–128 (RR) is a dUMP binding site. The active-site Nucleophile is Cys-147. DUMP-binding positions include 167 to 170 (RSAD), Asn-178, and 208 to 210 (HLY). Asp-170 contacts (6R)-5,10-methylene-5,6,7,8-tetrahydrofolate. A (6R)-5,10-methylene-5,6,7,8-tetrahydrofolate-binding site is contributed by Ser-264.

It belongs to the thymidylate synthase family. Bacterial-type ThyA subfamily. As to quaternary structure, homodimer.

The protein resides in the cytoplasm. The enzyme catalyses dUMP + (6R)-5,10-methylene-5,6,7,8-tetrahydrofolate = 7,8-dihydrofolate + dTMP. The protein operates within pyrimidine metabolism; dTTP biosynthesis. In terms of biological role, catalyzes the reductive methylation of 2'-deoxyuridine-5'-monophosphate (dUMP) to 2'-deoxythymidine-5'-monophosphate (dTMP) while utilizing 5,10-methylenetetrahydrofolate (mTHF) as the methyl donor and reductant in the reaction, yielding dihydrofolate (DHF) as a by-product. This enzymatic reaction provides an intracellular de novo source of dTMP, an essential precursor for DNA biosynthesis. This chain is Thymidylate synthase, found in Neisseria gonorrhoeae.